Consider the following 157-residue polypeptide: Phosphopantetheine adenylyltransferase (157 aa).

Residue S8 participates in substrate binding. ATP is bound by residues 8–9 (SF) and H16. Residues K40, T72, and R86 each contribute to the substrate site. Residues 87–89 (GLR), E97, and 122–128 (YSFLSSS) each bind ATP.

The protein belongs to the bacterial CoaD family. As to quaternary structure, homohexamer. The cofactor is Mg(2+).

The protein resides in the cytoplasm. The enzyme catalyses (R)-4'-phosphopantetheine + ATP + H(+) = 3'-dephospho-CoA + diphosphate. It participates in cofactor biosynthesis; coenzyme A biosynthesis; CoA from (R)-pantothenate: step 4/5. Reversibly transfers an adenylyl group from ATP to 4'-phosphopantetheine, yielding dephospho-CoA (dPCoA) and pyrophosphate. This chain is Phosphopantetheine adenylyltransferase, found in Crocosphaera subtropica (strain ATCC 51142 / BH68) (Cyanothece sp. (strain ATCC 51142)).